The primary structure comprises 189 residues: Large ribosomal subunit protein eL18 (189 aa).

It belongs to the eukaryotic ribosomal protein eL18 family.

The protein resides in the cytoplasm. The sequence is that of Large ribosomal subunit protein eL18 (RpL18) from Aedes aegypti (Yellowfever mosquito).